Here is a 461-residue protein sequence, read N- to C-terminus: V-type ATP synthase beta chain (461 aa).

The protein belongs to the ATPase alpha/beta chains family.

In terms of biological role, produces ATP from ADP in the presence of a proton gradient across the membrane. The V-type beta chain is a regulatory subunit. This chain is V-type ATP synthase beta chain, found in Streptococcus pneumoniae serotype 19F (strain G54).